A 339-amino-acid polypeptide reads, in one-letter code: MWWSLILLSCLLALTSAHDKPSFHPLSDDLINYINKQNTTWQAGRNFYNVDISYLKKLCGTVLGGPKLPGRVAFGEDIDLPETFDAREQWSNCPTIGQIRDQGSCGSCWAFGAVEAISDRTCIHTNGRVNVEVSAEDLLTCCGIQCGDGCNGGYPSGAWSFWTKKGLVSGGVYNSHVGCLPYTIPPCEHHVNGSRPPCTGEGDTPRCNKSCEAGYSPSYKEDKHFGYTSYSVSNSVKEIMAEIYKNGPVEGAFTVFSDFLTYKSGVYKHEAGDMMGGHAIRILGWGVENGVPYWLAANSWNLDWGDNGFFKILRGENHCGIESEIVAGIPRTDQYWGRF.

The first 17 residues, 1-17 (MWWSLILLSCLLALTSA), serve as a signal peptide directing secretion. Residues 18–79 (HDKPSFHPLS…GRVAFGEDID (62 aa)) constitute a propeptide, activation peptide. Cystine bridges form between cysteine 93-cysteine 122, cysteine 105-cysteine 150, cysteine 141-cysteine 207, cysteine 142-cysteine 146, cysteine 179-cysteine 211, and cysteine 187-cysteine 198. Residue cysteine 108 is part of the active site. N-linked (GlcNAc...) asparagine glycosylation is present at asparagine 192. Lysine 220 carries the N6-acetyllysine modification. Residues histidine 278 and asparagine 298 contribute to the active site. The propeptide occupies 334–339 (QYWGRF).

This sequence belongs to the peptidase C1 family. In terms of assembly, dimer of a heavy chain and a light chain cross-linked by a disulfide bond. Interacts with SRPX2. Directly interacts with SHKBP1. Expressed in thyroid epithelial cells.

Its subcellular location is the lysosome. The protein localises to the melanosome. It localises to the secreted. It is found in the extracellular space. The protein resides in the apical cell membrane. The enzyme catalyses Hydrolysis of proteins with broad specificity for peptide bonds. Preferentially cleaves -Arg-Arg-|-Xaa bonds in small molecule substrates (thus differing from cathepsin L). In addition to being an endopeptidase, shows peptidyl-dipeptidase activity, liberating C-terminal dipeptides.. In terms of biological role, thiol protease which is believed to participate in intracellular degradation and turnover of proteins. Cleaves matrix extracellular phosphoglycoprotein MEPE. Involved in the solubilization of cross-linked TG/thyroglobulin in the thyroid follicle lumen. Has also been implicated in tumor invasion and metastasis. The chain is Cathepsin B (Ctsb) from Mus musculus (Mouse).